The following is a 518-amino-acid chain: 3-octaprenyl-4-hydroxybenzoate carboxy-lyase (518 aa).

A Mn(2+)-binding site is contributed by Asn177. Residues 180–182 (IYR), 194–196 (RWL), and 199–200 (RG) each bind prenylated FMN. Mn(2+) is bound at residue Glu243. Catalysis depends on Asp318, which acts as the Proton donor.

It belongs to the UbiD family. As to quaternary structure, homohexamer. It depends on prenylated FMN as a cofactor. Mn(2+) serves as cofactor.

Its subcellular location is the cell membrane. The enzyme catalyses a 4-hydroxy-3-(all-trans-polyprenyl)benzoate + H(+) = a 2-(all-trans-polyprenyl)phenol + CO2. The protein operates within cofactor biosynthesis; ubiquinone biosynthesis. Catalyzes the decarboxylation of 3-octaprenyl-4-hydroxy benzoate to 2-octaprenylphenol, an intermediate step in ubiquinone biosynthesis. This chain is 3-octaprenyl-4-hydroxybenzoate carboxy-lyase, found in Burkholderia orbicola (strain AU 1054).